The sequence spans 314 residues: tRNA dimethylallyltransferase (314 aa).

An ATP-binding site is contributed by 8–15; it reads GPTGAGKS. 10-15 is a binding site for substrate; that stretch reads TGAGKS.

Belongs to the IPP transferase family. As to quaternary structure, monomer. Mg(2+) serves as cofactor.

It catalyses the reaction adenosine(37) in tRNA + dimethylallyl diphosphate = N(6)-dimethylallyladenosine(37) in tRNA + diphosphate. Functionally, catalyzes the transfer of a dimethylallyl group onto the adenine at position 37 in tRNAs that read codons beginning with uridine, leading to the formation of N6-(dimethylallyl)adenosine (i(6)A). This is tRNA dimethylallyltransferase from Mycobacterium tuberculosis (strain ATCC 25177 / H37Ra).